The chain runs to 220 residues: StAR-related lipid transfer protein 6 (220 aa).

The START domain occupies methionine 1–threonine 208.

May be involved in the intracellular transport of sterols or other lipids. May bind cholesterol or other sterols. The polypeptide is StAR-related lipid transfer protein 6 (STARD6) (Homo sapiens (Human)).